A 916-amino-acid chain; its full sequence is Calcium homeostasis endoplasmic reticulum protein (916 aa).

Residue Met-1 is modified to N-acetylmethionine. The stretch at 15-57 (VIDKLAQFVARNGPEFEKMTMEKQKDNPKFSFLFGGEFYSYYK) is one SURP motif repeat. An N6-acetyllysine modification is found at Lys-18. The CID domain maps to 149–289 (ETQLDMNEFD…QLQSPALGLG (141 aa)). 2 disordered regions span residues 336 to 549 (QQQQ…RFPP) and 601 to 635 (HPPW…PHIN). Residues 354-374 (TPPPPAPPPAPAPAPAIPPTT) show a composition bias toward pro residues. Over residues 480–501 (WNNQPDAAWNSQFEGPWNSQHE) the composition is skewed to polar residues. Pro residues predominate over residues 525–541 (PFPPHQQHPQFNQPPHP). The residue at position 714 (Tyr-714) is a Phosphotyrosine. Residues 722–878 (RARRRKGQEK…DPIKGGDVRD (157 aa)) are disordered. Residues 739–749 (SRSRSKSRGRS) show a composition bias toward basic residues. The span at 750–766 (SSRSNSRSSKSSGSYSR) shows a compositional bias: low complexity. Residues 767–815 (SRSRSCSRSYSRSRSRSRSRSRSSRSRSRSQSRSRSKSYSPGRRRRSRS) show a composition bias toward basic residues. Ser-813, Ser-815, and Ser-817 each carry phosphoserine. A Phosphothreonine modification is found at Thr-819. The residue at position 828 (Ser-828) is a Phosphoserine. One can recognise a G-patch domain in the interval 841-891 (EENKGHQMLVKMGWSGSGGLGAKEQGIQDPIKGGDVRDKWDQYKGVGVALD). Lys-844 is covalently cross-linked (Glycyl lysine isopeptide (Lys-Gly) (interchain with G-Cter in SUMO2)). A phosphoserine mark is found at Ser-855 and Ser-857. Lys-872 is covalently cross-linked (Glycyl lysine isopeptide (Lys-Gly) (interchain with G-Cter in SUMO2)). N6-acetyllysine is present on Lys-879. Position 904 is a phosphoserine (Ser-904).

In terms of tissue distribution, expressed in brain, placenta, lung, liver, kidney, pancreas, cardiac and skeletal muscle, and in cultured HEL and Dami cells.

The protein resides in the cytoplasm. Its subcellular location is the perinuclear region. The protein localises to the endoplasmic reticulum. Its function is as follows. Involved in calcium homeostasis, growth and proliferation. The sequence is that of Calcium homeostasis endoplasmic reticulum protein from Homo sapiens (Human).